Consider the following 180-residue polypeptide: uncharacterized protein (180 aa).

To H.influenzae HI_0656.1.

This is an uncharacterized protein from Escherichia coli (strain K12).